A 98-amino-acid polypeptide reads, in one-letter code: Large ribosomal subunit protein bL25 (98 aa).

The tract at residues 1–23 (MANFVLNAQARAEDKQGKGASRR) is disordered.

Belongs to the bacterial ribosomal protein bL25 family. As to quaternary structure, part of the 50S ribosomal subunit; part of the 5S rRNA/L5/L18/L25 subcomplex. Contacts the 5S rRNA. Binds to the 5S rRNA independently of L5 and L18.

Functionally, this is one of the proteins that binds to the 5S RNA in the ribosome where it forms part of the central protuberance. This is Large ribosomal subunit protein bL25 from Acinetobacter baumannii (strain ATCC 17978 / DSM 105126 / CIP 53.77 / LMG 1025 / NCDC KC755 / 5377).